The chain runs to 529 residues: VIN3-like protein 3 (529 aa).

Positions proline 97 to leucine 104 match the Nuclear localization signal motif. The segment at arginine 137–threonine 207 adopts a PHD-type zinc-finger fold. Residues leucine 214–alanine 221 carry the Nuclear localization signal motif. The 100-residue stretch at glycine 312–aspartate 411 folds into the Fibronectin type-III domain. Residues methionine 421–aspartate 529 form a VIN3-Interacting Domain (VID) region.

Interacts with VIN3.

It is found in the nucleus. Involved in both the vernalization and photoperiod pathways by regulating gene expression. The polypeptide is VIN3-like protein 3 (VIL3) (Arabidopsis thaliana (Mouse-ear cress)).